Reading from the N-terminus, the 61-residue chain is Sec-independent protein translocase protein TatA (61 aa).

The helical transmembrane segment at 1–21 (MFGIGMPEMLIILVIILIIFG) threads the bilayer.

This sequence belongs to the TatA/E family. As to quaternary structure, the Tat system comprises two distinct complexes: a TatABC complex, containing multiple copies of TatA, TatB and TatC subunits, and a separate TatA complex, containing only TatA subunits. Substrates initially bind to the TatABC complex, which probably triggers association of the separate TatA complex to form the active translocon.

The protein resides in the cell inner membrane. Functionally, part of the twin-arginine translocation (Tat) system that transports large folded proteins containing a characteristic twin-arginine motif in their signal peptide across membranes. TatA could form the protein-conducting channel of the Tat system. In Syntrophus aciditrophicus (strain SB), this protein is Sec-independent protein translocase protein TatA.